The following is a 346-amino-acid chain: S-adenosylmethionine:tRNA ribosyltransferase-isomerase (346 aa).

This sequence belongs to the QueA family. As to quaternary structure, monomer.

Its subcellular location is the cytoplasm. It catalyses the reaction 7-aminomethyl-7-carbaguanosine(34) in tRNA + S-adenosyl-L-methionine = epoxyqueuosine(34) in tRNA + adenine + L-methionine + 2 H(+). The protein operates within tRNA modification; tRNA-queuosine biosynthesis. Transfers and isomerizes the ribose moiety from AdoMet to the 7-aminomethyl group of 7-deazaguanine (preQ1-tRNA) to give epoxyqueuosine (oQ-tRNA). This Lysinibacillus sphaericus (strain C3-41) protein is S-adenosylmethionine:tRNA ribosyltransferase-isomerase.